A 126-amino-acid chain; its full sequence is Glycine cleavage system H protein (126 aa).

Residues 22–104 (IATVGITAFA…YGRGWLFKVE (83 aa)) enclose the Lipoyl-binding domain. An N6-lipoyllysine modification is found at Lys63.

Belongs to the GcvH family. As to quaternary structure, the glycine cleavage system is composed of four proteins: P, T, L and H. (R)-lipoate serves as cofactor.

In terms of biological role, the glycine cleavage system catalyzes the degradation of glycine. The H protein shuttles the methylamine group of glycine from the P protein to the T protein. This is Glycine cleavage system H protein from Thermobifida fusca (strain YX).